Here is a 276-residue protein sequence, read N- to C-terminus: Rhomboid protease GlpG (276 aa).

The next 6 helical transmembrane spans lie at G94–V114, A142–G162, L169–Q189, F192–W212, L229–I249, and A250–L270. S201 serves as the catalytic Nucleophile. The active site involves H254.

Belongs to the peptidase S54 family.

It is found in the cell inner membrane. The catalysed reaction is Cleaves type-1 transmembrane domains using a catalytic dyad composed of serine and histidine that are contributed by different transmembrane domains.. Rhomboid-type serine protease that catalyzes intramembrane proteolysis. The sequence is that of Rhomboid protease GlpG from Enterobacter sp. (strain 638).